A 611-amino-acid chain; its full sequence is Major facilitator superfamily domain-containing protein YCR023C (611 aa).

Over 1-89 (MARQKLTFKE…GRFSEKHGRK (89 aa)) the chain is Extracellular. The chain crosses the membrane as a helical span at residues 90 to 110 (ITLTCGLIGTSVSLLILGFSR). Topologically, residues 111 to 152 (NFYQALVARSLMGLLNGNVGVIRTIIGEIATERKHQALAFST) are cytoplasmic. A helical transmembrane segment spans residues 153 to 173 (MPLLFQFGAVVGPMIGGFLVF). The Extracellular segment spans residues 174–199 (RDGTMNEVPLWFPHFAKRIIRSYPYA). Residues 200-220 (LPNVVVCMFLMFGLTNATLFL) traverse the membrane as a helical segment. The Cytoplasmic portion of the chain corresponds to 221–353 (EETHPAFKDR…SIFHHVFHTK (133 aa)). Positions 261–271 (DDSENIHHRNE) are enriched in basic and acidic residues. Residues 261 to 301 (DDSENIHHRNENVNSIRGQDSEEDENSPLVNTTNDDDTESI) are disordered. Residue S313 is modified to Phosphoserine. The helical transmembrane segment at 354-372 (VFYPISVNFIMALHLIVYN) threads the bilayer. Over 373–413 (EFLPVFLAYDLAVDPENPKKLASKFPWKISGGIGYEPEQTG) the chain is Extracellular. The helical transmembrane segment at 414 to 434 (TLLSTTGIFGCFVVIFIFPIV) threads the bilayer. The Cytoplasmic segment spans residues 435–442 (DRNFDCLT). The chain crosses the membrane as a helical span at residues 443 to 463 (IFRTLVKLYPIMYVMVPYVVF). Over 464–542 (LQNERIPSWY…YIMSWSQQND (79 aa)) the chain is Extracellular. The chain crosses the membrane as a helical span at residues 543–563 (VAWVSWWSLSLFCMVALYQSY). The Cytoplasmic segment spans residues 564–611 (KIAPIDDNENELHGQGSEDAYNSQSQSSDLRMAHRSSLSSLSNQRCTT). The residue at position 603 (S603) is a Phosphoserine.

Belongs to the major facilitator superfamily.

Its subcellular location is the membrane. It carries out the reaction chloride(in) = chloride(out). Its function is as follows. Outward-rectifying chloride channel involved in chloride homeostasis. The polypeptide is Major facilitator superfamily domain-containing protein YCR023C (Saccharomyces cerevisiae (strain ATCC 204508 / S288c) (Baker's yeast)).